The sequence spans 159 residues: MVEYAHSKPVDPEEWTVIDAENAVLGRLASVVAKRILKGERIAVINTEKAIITGKKNTIKEEWLQKIQRGDPKKGPFYPRRPDLIFRRVVRGMLPWKTKRGREAFKRLRAYIGTPRWVEEANIEPERVAEADMSRLGHLWYVTLGELSEELGYQMPGGQ.

This sequence belongs to the universal ribosomal protein uL13 family. As to quaternary structure, part of the 50S ribosomal subunit.

This protein is one of the early assembly proteins of the 50S ribosomal subunit, although it is not seen to bind rRNA by itself. It is important during the early stages of 50S assembly. In Methanopyrus kandleri (strain AV19 / DSM 6324 / JCM 9639 / NBRC 100938), this protein is Large ribosomal subunit protein uL13.